Consider the following 529-residue polypeptide: Glucocorticoid modulatory element-binding protein 2 (529 aa).

The 83-residue stretch at 80-162 folds into the SAND domain; it reads EEGENLEAEI…RKIMDSGELD (83 aa). A Zn(2+)-binding site is contributed by cysteine 109. DNA is bound by residues lysine 135, lysine 139, lysine 142, and arginine 153. Lysine 154 is covalently cross-linked (Glycyl lysine isopeptide (Lys-Gly) (interchain with G-Cter in SUMO1); alternate). Lysine 154 is covalently cross-linked (Glycyl lysine isopeptide (Lys-Gly) (interchain with G-Cter in SUMO2); alternate). Zn(2+)-binding residues include histidine 166, cysteine 170, and cysteine 174. Residues 244–347 adopt a coiled-coil conformation; the sequence is LLDEVIQEFQ…HLSNVLMTLT (104 aa). The residue at position 372 (serine 372) is a Phosphoserine.

In terms of assembly, homodimer, and heterodimer of GMEB1 and GMEB2. Interacts with the glucocorticoid receptor (NR3C1). May interact with CREB-binding protein (CBP).

It is found in the nucleus. It localises to the cytoplasm. In terms of biological role, trans-acting factor that binds to glucocorticoid modulatory elements (GME) present in the TAT (tyrosine aminotransferase) promoter and increases sensitivity to low concentrations of glucocorticoids. Also binds to the transferrin receptor promoter. The sequence is that of Glucocorticoid modulatory element-binding protein 2 (Gmeb2) from Rattus norvegicus (Rat).